We begin with the raw amino-acid sequence, 328 residues long: UPF0194 membrane protein YPA_1093 (328 aa).

A signal peptide spans 1 to 22 (MNRKKIIVAAVIVALLATLAYG). 2 coiled-coil regions span residues 80-109 (YLNALKQAQANVQSAQAQLALLKAGYREEE) and 141-209 (KAVS…ILLA).

The protein belongs to the UPF0194 family.

The protein resides in the periplasm. In Yersinia pestis bv. Antiqua (strain Antiqua), this protein is UPF0194 membrane protein YPA_1093.